Reading from the N-terminus, the 233-residue chain is uncharacterized protein (233 aa).

The next 6 helical transmembrane spans lie at 7–27 (VPIFIAILSFIVMCIGELLAY), 36–56 (YEFEAISFGFIFGVATLILIP), 62–82 (MFVLYVILGMITVYLIEKYLA), 119–139 (LIIAVSYISEIGLPLYLAILM), 159–179 (PLYPGVFVSFGTVLGTIVGLV), and 188–208 (ILLAFSGGVFLGAFLMLAPHI).

The protein localises to the cell membrane. This is an uncharacterized protein from Methanocaldococcus jannaschii (strain ATCC 43067 / DSM 2661 / JAL-1 / JCM 10045 / NBRC 100440) (Methanococcus jannaschii).